Reading from the N-terminus, the 536-residue chain is CTP synthase (536 aa).

An amidoligase domain region spans residues 1 to 267 (MSKFVFVTGG…CKQTLNCLEL (267 aa)). Position 13 (Ser-13) interacts with CTP. Ser-13 contacts UTP. Residues 14–19 (SIGKGI) and Asp-71 each bind ATP. Positions 71 and 141 each coordinate Mg(2+). CTP-binding positions include 148-150 (DIE), 188-193 (KTKPTQ), and Lys-224. UTP is bound by residues 188 to 193 (KTKPTQ) and Lys-224. Residues 292–534 (KVALVGKYIE…IKASQEKLEQ (243 aa)) form the Glutamine amidotransferase type-1 domain. Gly-354 is a binding site for L-glutamine. The active-site Nucleophile; for glutamine hydrolysis is the Cys-381. Residues 382–385 (LGMQ), Glu-405, and Arg-462 each bind L-glutamine. Catalysis depends on residues His-507 and Glu-509.

The protein belongs to the CTP synthase family. As to quaternary structure, homotetramer.

It catalyses the reaction UTP + L-glutamine + ATP + H2O = CTP + L-glutamate + ADP + phosphate + 2 H(+). The enzyme catalyses L-glutamine + H2O = L-glutamate + NH4(+). It carries out the reaction UTP + NH4(+) + ATP = CTP + ADP + phosphate + 2 H(+). It participates in pyrimidine metabolism; CTP biosynthesis via de novo pathway; CTP from UDP: step 2/2. Allosterically activated by GTP, when glutamine is the substrate; GTP has no effect on the reaction when ammonia is the substrate. The allosteric effector GTP functions by stabilizing the protein conformation that binds the tetrahedral intermediate(s) formed during glutamine hydrolysis. Inhibited by the product CTP, via allosteric rather than competitive inhibition. In terms of biological role, catalyzes the ATP-dependent amination of UTP to CTP with either L-glutamine or ammonia as the source of nitrogen. Regulates intracellular CTP levels through interactions with the four ribonucleotide triphosphates. The sequence is that of CTP synthase from Prochlorococcus marinus subsp. pastoris (strain CCMP1986 / NIES-2087 / MED4).